The following is a 325-amino-acid chain: ADP-ribose glycohydrolase MACROD1 (325 aa).

Residues Lys-96, Lys-103, and Lys-129 each carry the N6-succinyllysine modification. A Glycyl lysine isopeptide (Lys-Gly) (interchain with G-Cter in SUMO2) cross-link involves residue Lys-138. Residues 141 to 322 (EPRYKKDKQL…IYRSRLPHYF (182 aa)) form the Macro domain. A substrate-binding site is contributed by 159-161 (SDI). At Lys-163 the chain carries N6-acetyllysine. Residues 172 to 174 (AAN), 179 to 184 (GGGGVD), 267 to 273 (ISTGVFG), and Phe-306 contribute to the substrate site.

Belongs to the MacroD-type family. MacroD1/2-like subfamily. As to quaternary structure, interacts with ESR1; Interacts in a manner that is estrogen independent but is enhanced by estrogen. Interacts (via macro domain) with AR.

The protein localises to the nucleus. It carries out the reaction 3''-O-acetyl-ADP-D-ribose + H2O = ADP-D-ribose + acetate + H(+). It catalyses the reaction 2''-O-acetyl-ADP-D-ribose + H2O = ADP-D-ribose + acetate + H(+). The enzyme catalyses 4-O-(ADP-D-ribosyl)-L-aspartyl-[protein] + H2O = L-aspartyl-[protein] + ADP-D-ribose + H(+). The catalysed reaction is 5-O-(ADP-D-ribosyl)-L-glutamyl-[protein] + H2O = L-glutamyl-[protein] + ADP-D-ribose + H(+). It carries out the reaction alpha-NAD(+) + H2O = ADP-D-ribose + nicotinamide + H(+). Its activity is regulated as follows. Subject to competitive inhibition by the product ADP-ribose. Its function is as follows. Removes ADP-ribose from aspartate and glutamate residues in proteins bearing a single ADP-ribose moiety. Inactive towards proteins bearing poly-ADP-ribose. Deacetylates O-acetyl-ADP ribose, a signaling molecule generated by the deacetylation of acetylated lysine residues in histones and other proteins. Plays a role in estrogen signaling. Binds to androgen receptor (AR) and amplifies the transactivation function of AR in response to androgen. May play an important role in carcinogenesis and/or progression of hormone-dependent cancers by feed-forward mechanism that activates ESR1 transactivation. Could be an ESR1 coactivator, providing a positive feedback regulatory loop for ESR1 signal transduction. Could be involved in invasive growth by down-regulating CDH1 in endometrial cancer cells. Enhances ESR1-mediated transcription activity. This chain is ADP-ribose glycohydrolase MACROD1, found in Homo sapiens (Human).